The primary structure comprises 506 residues: FAD-linked oxidoreductase aurO (506 aa).

The FAD-binding PCMH-type domain maps to Ile-92–Met-260.

This sequence belongs to the oxygen-dependent FAD-linked oxidoreductase family. As to quaternary structure, might be part of an extracellular enzyme complex composed of GIP1, aurF, aurO and aurS. It depends on FAD as a cofactor.

It is found in the secreted. The protein resides in the extracellular space. It participates in pigment biosynthesis. Functionally, FAD-linked oxidoreductase; part of the gene cluster that mediates the biosynthesis of aurofusarin, a red mycelium pigment which is acting as a mycotoxin. The first step is performed by the polyketide synthase which condenses one acetyl-CoA and 6 malonyl-CoA units to form the first intermediate, the cyclic heptaketide and yellow pigment YWA1. The C2 hydroxyl group in the pyrone ring of YWA1 is probably formed during ring closure by an aldol-type cyclization reaction. The dehydratase aurZ then acts as the first tailoring enzyme in the aurofusarin biosynthetic pathway by converting YWA1 to nor-rubrofusarin. Nor-rubrofusarin is then methylated to rubrofusarin by the O-methyltransferase aurJ. Rubrofusarin is then transported across the plasma membrane by the rubrofusarin-specific pump aurT for further enzymatic processing by the extracellular complex composed of GIP1, aurF, aurO and aurS to yield aurofusarin. In Gibberella zeae (strain ATCC MYA-4620 / CBS 123657 / FGSC 9075 / NRRL 31084 / PH-1) (Wheat head blight fungus), this protein is FAD-linked oxidoreductase aurO.